The sequence spans 280 residues: 2,3,4,5-tetrahydropyridine-2,6-dicarboxylate N-succinyltransferase (280 aa).

Belongs to the transferase hexapeptide repeat family.

It localises to the cytoplasm. It catalyses the reaction (S)-2,3,4,5-tetrahydrodipicolinate + succinyl-CoA + H2O = (S)-2-succinylamino-6-oxoheptanedioate + CoA. It functions in the pathway amino-acid biosynthesis; L-lysine biosynthesis via DAP pathway; LL-2,6-diaminopimelate from (S)-tetrahydrodipicolinate (succinylase route): step 1/3. The chain is 2,3,4,5-tetrahydropyridine-2,6-dicarboxylate N-succinyltransferase from Methylorubrum populi (strain ATCC BAA-705 / NCIMB 13946 / BJ001) (Methylobacterium populi).